Reading from the N-terminus, the 177-residue chain is Large ribosomal subunit protein uL6 (177 aa).

It belongs to the universal ribosomal protein uL6 family. In terms of assembly, part of the 50S ribosomal subunit.

This protein binds to the 23S rRNA, and is important in its secondary structure. It is located near the subunit interface in the base of the L7/L12 stalk, and near the tRNA binding site of the peptidyltransferase center. The sequence is that of Large ribosomal subunit protein uL6 from Rickettsia typhi (strain ATCC VR-144 / Wilmington).